Consider the following 118-residue polypeptide: Large ribosomal subunit protein bL19 (118 aa).

Belongs to the bacterial ribosomal protein bL19 family.

This protein is located at the 30S-50S ribosomal subunit interface and may play a role in the structure and function of the aminoacyl-tRNA binding site. In Campylobacter curvus (strain 525.92), this protein is Large ribosomal subunit protein bL19.